The primary structure comprises 446 residues: 3-phosphoshikimate 1-carboxyvinyltransferase (446 aa).

Residues K27, S28, and R32 each contribute to the 3-phosphoshikimate site. Position 27 (K27) interacts with phosphoenolpyruvate. 2 residues coordinate phosphoenolpyruvate: G100 and R128. 3-phosphoshikimate-binding residues include S177, Q179, D330, and K357. Position 179 (Q179) interacts with phosphoenolpyruvate. D330 (proton acceptor) is an active-site residue. The phosphoenolpyruvate site is built by R361 and R406.

Belongs to the EPSP synthase family. In terms of assembly, monomer.

The protein resides in the cytoplasm. The catalysed reaction is 3-phosphoshikimate + phosphoenolpyruvate = 5-O-(1-carboxyvinyl)-3-phosphoshikimate + phosphate. It participates in metabolic intermediate biosynthesis; chorismate biosynthesis; chorismate from D-erythrose 4-phosphate and phosphoenolpyruvate: step 6/7. Catalyzes the transfer of the enolpyruvyl moiety of phosphoenolpyruvate (PEP) to the 5-hydroxyl of shikimate-3-phosphate (S3P) to produce enolpyruvyl shikimate-3-phosphate and inorganic phosphate. The chain is 3-phosphoshikimate 1-carboxyvinyltransferase from Sphingopyxis alaskensis (strain DSM 13593 / LMG 18877 / RB2256) (Sphingomonas alaskensis).